The following is a 677-amino-acid chain: Probable serine/threonine-protein kinase mkcF (677 aa).

Residues 1-58 (MLYLVATGDYKGPSENHLSFTKGQRIEFLERTENGFIKGKLDGKVGIFPSSLITIETR) form the SH3 domain. Residues 72-244 (TETKDDTGSI…SSSSSSTKRR (173 aa)) are disordered. Over residues 79-94 (GSISSSTSTSTSSLTT) the composition is skewed to low complexity. Positions 105–126 (GEQQPSTSTINGQSSSTSPILQ) are enriched in polar residues. Residues 127 to 146 (SNGTTNTTTSSTSNNNIGDN) show a composition bias toward low complexity. The segment covering 158-174 (TTSNHSKSASRLSVASF) has biased composition (polar residues). A compositionally biased stretch (low complexity) spans 175–192 (STTTTATTTTTTTTTATS). Residues 209–224 (DKKSKDDDKSEKEGLY) are compositionally biased toward basic and acidic residues. Over residues 230-240 (SSSSSSSSSSS) the composition is skewed to low complexity. In terms of domain architecture, Protein kinase spans 401 to 646 (IKFTHMVGRG…VDKLMRHPFF (246 aa)). ATP contacts are provided by residues 407–415 (VGRGQYGKV) and K428. Residue D519 is the Proton acceptor of the active site.

This sequence belongs to the protein kinase superfamily. Ser/Thr protein kinase family. STE20 subfamily. The cofactor is Mg(2+).

The enzyme catalyses L-seryl-[protein] + ATP = O-phospho-L-seryl-[protein] + ADP + H(+). It carries out the reaction L-threonyl-[protein] + ATP = O-phospho-L-threonyl-[protein] + ADP + H(+). This Dictyostelium discoideum (Social amoeba) protein is Probable serine/threonine-protein kinase mkcF.